The chain runs to 104 residues: N(4)-acetylcytidine amidohydrolase (104 aa).

In terms of domain architecture, ASCH spans 6–96; the sequence is ITFYQRFEAD…TIYPNEHESW (91 aa). Lys-21 serves as the catalytic Proton acceptor. Thr-24 acts as the Nucleophile in catalysis. Glu-74 acts as the Proton donor in catalysis.

Belongs to the N(4)-acetylcytidine amidohydrolase family.

It carries out the reaction N(4)-acetylcytidine + H2O = cytidine + acetate + H(+). The catalysed reaction is N(4)-acetyl-2'-deoxycytidine + H2O = 2'-deoxycytidine + acetate + H(+). It catalyses the reaction N(4)-acetylcytosine + H2O = cytosine + acetate + H(+). In terms of biological role, catalyzes the hydrolysis of N(4)-acetylcytidine (ac4C). This Haemophilus influenzae (strain 86-028NP) protein is N(4)-acetylcytidine amidohydrolase.